The chain runs to 142 residues: U1 small nuclear ribonucleoprotein C (142 aa).

A Matrin-type zinc finger spans residues 4–36 (YYCDYCDTFLTHDSPSVRKTHNGGRKHKDNVRM).

This sequence belongs to the U1 small nuclear ribonucleoprotein C family. As to quaternary structure, U1 snRNP is composed of the 7 core Sm proteins B/B', D1, D2, D3, E, F and G that assemble in a heptameric protein ring on the Sm site of the small nuclear RNA to form the core snRNP, and at least 3 U1 snRNP-specific proteins U1-70K, U1-A and U1-C. U1-C interacts with U1 snRNA and the 5' splice-site region of the pre-mRNA.

The protein localises to the nucleus. In terms of biological role, component of the spliceosomal U1 snRNP, which is essential for recognition of the pre-mRNA 5' splice-site and the subsequent assembly of the spliceosome. U1-C is directly involved in initial 5' splice-site recognition for both constitutive and regulated alternative splicing. The interaction with the 5' splice-site seems to precede base-pairing between the pre-mRNA and the U1 snRNA. Stimulates commitment or early (E) complex formation by stabilizing the base pairing of the 5' end of the U1 snRNA and the 5' splice-site region. The polypeptide is U1 small nuclear ribonucleoprotein C (Caenorhabditis elegans).